Consider the following 276-residue polypeptide: Acetyl-coenzyme A carboxylase carboxyl transferase subunit beta (276 aa).

In terms of domain architecture, CoA carboxyltransferase N-terminal spans 24–276 (LWRECSNCHE…NNLLNLHSDK (253 aa)). Positions 28, 31, 46, and 49 each coordinate Zn(2+). Residues 28–49 (CSNCHEKFYYRRAGVYEVCPNC) form a C4-type zinc finger.

This sequence belongs to the AccD/PCCB family. As to quaternary structure, acetyl-CoA carboxylase is a heterohexamer composed of biotin carboxyl carrier protein (AccB), biotin carboxylase (AccC) and two subunits each of ACCase subunit alpha (AccA) and ACCase subunit beta (AccD). It depends on Zn(2+) as a cofactor.

It localises to the cytoplasm. The catalysed reaction is N(6)-carboxybiotinyl-L-lysyl-[protein] + acetyl-CoA = N(6)-biotinyl-L-lysyl-[protein] + malonyl-CoA. It participates in lipid metabolism; malonyl-CoA biosynthesis; malonyl-CoA from acetyl-CoA: step 1/1. Its function is as follows. Component of the acetyl coenzyme A carboxylase (ACC) complex. Biotin carboxylase (BC) catalyzes the carboxylation of biotin on its carrier protein (BCCP) and then the CO(2) group is transferred by the transcarboxylase to acetyl-CoA to form malonyl-CoA. This Pediococcus pentosaceus (strain ATCC 25745 / CCUG 21536 / LMG 10740 / 183-1w) protein is Acetyl-coenzyme A carboxylase carboxyl transferase subunit beta.